We begin with the raw amino-acid sequence, 156 residues long: ATP synthase subunit b (156 aa).

A helical transmembrane segment spans residues L7–P27.

It belongs to the ATPase B chain family. As to quaternary structure, F-type ATPases have 2 components, F(1) - the catalytic core - and F(0) - the membrane proton channel. F(1) has five subunits: alpha(3), beta(3), gamma(1), delta(1), epsilon(1). F(0) has three main subunits: a(1), b(2) and c(10-14). The alpha and beta chains form an alternating ring which encloses part of the gamma chain. F(1) is attached to F(0) by a central stalk formed by the gamma and epsilon chains, while a peripheral stalk is formed by the delta and b chains.

It localises to the cell inner membrane. Functionally, f(1)F(0) ATP synthase produces ATP from ADP in the presence of a proton or sodium gradient. F-type ATPases consist of two structural domains, F(1) containing the extramembraneous catalytic core and F(0) containing the membrane proton channel, linked together by a central stalk and a peripheral stalk. During catalysis, ATP synthesis in the catalytic domain of F(1) is coupled via a rotary mechanism of the central stalk subunits to proton translocation. Its function is as follows. Component of the F(0) channel, it forms part of the peripheral stalk, linking F(1) to F(0). This chain is ATP synthase subunit b, found in Delftia acidovorans (strain DSM 14801 / SPH-1).